Reading from the N-terminus, the 380-residue chain is Lipid-A-disaccharide synthase (380 aa).

Belongs to the LpxB family.

It carries out the reaction a lipid X + a UDP-2-N,3-O-bis[(3R)-3-hydroxyacyl]-alpha-D-glucosamine = a lipid A disaccharide + UDP + H(+). It participates in bacterial outer membrane biogenesis; LPS lipid A biosynthesis. Condensation of UDP-2,3-diacylglucosamine and 2,3-diacylglucosamine-1-phosphate to form lipid A disaccharide, a precursor of lipid A, a phosphorylated glycolipid that anchors the lipopolysaccharide to the outer membrane of the cell. The protein is Lipid-A-disaccharide synthase of Azotobacter vinelandii (strain DJ / ATCC BAA-1303).